Here is a 932-residue protein sequence, read N- to C-terminus: Protocadherin gamma-A7 (932 aa).

Positions 1–28 (MAAQPRGGDCRGFVLLSILLGTPWEAWA) are cleaved as a signal peptide. 6 Cadherin domains span residues 29–133 (GRIL…VPRF), 134–242 (LTEE…TPVF), 243–347 (SLPQ…APEV), 348–452 (TMTS…PPTF), 453–562 (PHSS…PPEI), and 570–682 (DGST…EPSD). Residues 29-692 (GRILYSVSEE…GPYNYDLTLY (664 aa)) are Extracellular-facing. Asn419 and Asn545 each carry an N-linked (GlcNAc...) asparagine glycan. The helical transmembrane segment at 693-713 (LVVAVAAVSCVFLAFVLVLLA) threads the bilayer. The Cytoplasmic segment spans residues 714-932 (LRLRRWHKSR…KKKSGKKEKK (219 aa)). 2 disordered regions span residues 804–841 (VPSIQQAPPNTDWRFSQAQRPGTSGSQNGDDTGTWPNN) and 902–932 (ATLTNAAGKRDGKAPAGGNGNKKKSGKKEKK). The segment covering 806–841 (SIQQAPPNTDWRFSQAQRPGTSGSQNGDDTGTWPNN) has biased composition (polar residues). Residues 922–932 (NKKKSGKKEKK) are compositionally biased toward basic residues.

The protein localises to the cell membrane. Its function is as follows. Potential calcium-dependent cell-adhesion protein. May be involved in the establishment and maintenance of specific neuronal connections in the brain. The chain is Protocadherin gamma-A7 (PCDHGA7) from Pan troglodytes (Chimpanzee).